Consider the following 490-residue polypeptide: Probable cytosol aminopeptidase (490 aa).

Mn(2+) contacts are provided by K262 and D267. K274 is an active-site residue. Mn(2+) contacts are provided by D285, D344, and E346. R348 is a catalytic residue.

The protein belongs to the peptidase M17 family. Requires Mn(2+) as cofactor.

The protein resides in the cytoplasm. It carries out the reaction Release of an N-terminal amino acid, Xaa-|-Yaa-, in which Xaa is preferably Leu, but may be other amino acids including Pro although not Arg or Lys, and Yaa may be Pro. Amino acid amides and methyl esters are also readily hydrolyzed, but rates on arylamides are exceedingly low.. The catalysed reaction is Release of an N-terminal amino acid, preferentially leucine, but not glutamic or aspartic acids.. Its function is as follows. Presumably involved in the processing and regular turnover of intracellular proteins. Catalyzes the removal of unsubstituted N-terminal amino acids from various peptides. This Xanthomonas oryzae pv. oryzae (strain MAFF 311018) protein is Probable cytosol aminopeptidase.